Consider the following 211-residue polypeptide: Large ribosomal subunit protein uL3 (211 aa).

The protein belongs to the universal ribosomal protein uL3 family. As to quaternary structure, part of the 50S ribosomal subunit. Forms a cluster with proteins L14 and L19.

One of the primary rRNA binding proteins, it binds directly near the 3'-end of the 23S rRNA, where it nucleates assembly of the 50S subunit. The sequence is that of Large ribosomal subunit protein uL3 from Geotalea daltonii (strain DSM 22248 / JCM 15807 / FRC-32) (Geobacter daltonii).